Consider the following 360-residue polypeptide: Membrane-bound lytic murein transglycosylase C (360 aa).

Residues 1–16 (MKKYLALALIAPLLVS) form the signal peptide. Cys17 carries the N-palmitoyl cysteine lipid modification. A lipid anchor (S-diacylglycerol cysteine) is attached at Cys17.

The protein belongs to the transglycosylase Slt family.

It localises to the cell outer membrane. The enzyme catalyses Exolytic cleavage of the (1-&gt;4)-beta-glycosidic linkage between N-acetylmuramic acid (MurNAc) and N-acetylglucosamine (GlcNAc) residues in peptidoglycan, from either the reducing or the non-reducing ends of the peptidoglycan chains, with concomitant formation of a 1,6-anhydrobond in the MurNAc residue.. Its function is as follows. Murein-degrading enzyme. May play a role in recycling of muropeptides during cell elongation and/or cell division. The chain is Membrane-bound lytic murein transglycosylase C from Klebsiella pneumoniae subsp. pneumoniae (strain ATCC 700721 / MGH 78578).